A 371-amino-acid chain; its full sequence is N-acetyldiaminopimelate deacetylase (371 aa).

Aspartate 68 is a catalytic residue. Glutamate 127 acts as the Proton acceptor in catalysis.

This sequence belongs to the peptidase M20A family. N-acetyldiaminopimelate deacetylase subfamily.

The catalysed reaction is N-acetyl-(2S,6S)-2,6-diaminopimelate + H2O = (2S,6S)-2,6-diaminopimelate + acetate. It functions in the pathway amino-acid biosynthesis; L-lysine biosynthesis via DAP pathway; LL-2,6-diaminopimelate from (S)-tetrahydrodipicolinate (acetylase route): step 3/3. Its function is as follows. Catalyzes the conversion of N-acetyl-diaminopimelate to diaminopimelate and acetate. This Listeria monocytogenes serovar 1/2a (strain ATCC BAA-679 / EGD-e) protein is N-acetyldiaminopimelate deacetylase.